The chain runs to 591 residues: Transcription factor COE1 (591 aa).

Position 1 is an N-acetylmethionine (Met1). A compositionally biased stretch (polar residues) spans 1 to 14 (MFGIQESIQRSGSS). Residues 1 to 21 (MFGIQESIQRSGSSMKEEPLG) form a disordered region. A Glycyl lysine isopeptide (Lys-Gly) (interchain with G-Cter in SUMO1); alternate cross-link involves residue Lys16. Lys16 participates in a covalent cross-link: Glycyl lysine isopeptide (Lys-Gly) (interchain with G-Cter in SUMO2); alternate. Residues 63–66 (RKSN) are interaction with DNA. The C5-type zinc finger occupies 151–170 (CRVLLTHEIMCSRCCDKKSC). 2 interaction with DNA regions span residues 197–204 (NCLKNAGN) and 236–239 (NNSK). The region spanning 262-345 (PCIKAISPSE…KGTPGRFIYT (84 aa)) is the IPT/TIG domain. Residues 457 to 480 (GFTRNSSSVSPHGYVPSTTPQQTN) form a disordered region.

Belongs to the COE family. In terms of assembly, homodimer. Interacts with ZNF423 and ZNF521, leading to prevent EBF1 to bind DNA and activate target genes. Interacts with CCR4-NOT component CNOT3. As to quaternary structure, (Microbial infection) Interacts with Epstein-barr virus protein EBNA2.

Its subcellular location is the nucleus. Key pioneer transcription factor of B-cell specification and commitment. Recognizes variations of the palindromic sequence 5'-ATTCCCNNGGGAATT-3'. Operates in a transcription factor network to activate B-cell-specific genes and repress genes associated with alternative cell fates. For instance, positively regulates many B-cell specific genes including BCR or CD40 while repressing genes that direct cells into alternative lineages, including GATA3 and TCF7 for the T-cell lineage. In addition to its role during lymphopoiesis, controls the thermogenic gene program in adipocytes during development and in response to environmental cold. In terms of biological role, (Microbial infection) Acts as a chromatin anchor for Epstein-Barr virus EBNA2 to mediate the assembly of EBNA2 chromatin complexes in B-cells. In addition, binds to the viral LMP1 proximal promoter and promotes its expression during latency. The protein is Transcription factor COE1 (EBF1) of Homo sapiens (Human).